A 448-amino-acid polypeptide reads, in one-letter code: Putative RNA-ligase (448 aa).

This sequence belongs to the asfivirus M448R family.

The protein localises to the virion. This is Putative RNA-ligase from African swine fever virus (isolate Pig/Kenya/KEN-50/1950) (ASFV).